The primary structure comprises 64 residues: uncharacterized protein (64 aa).

This is an uncharacterized protein from African swine fever virus (strain Badajoz 1971 Vero-adapted) (Ba71V).